Consider the following 495-residue polypeptide: Cobyric acid synthase (495 aa).

The GATase cobBQ-type domain maps to 258–427 (GLRVAAVRLP…WHGLFDNDGF (170 aa)). Catalysis depends on Cys339, which acts as the Nucleophile. The active site involves His419.

It belongs to the CobB/CobQ family. CobQ subfamily.

Its pathway is cofactor biosynthesis; adenosylcobalamin biosynthesis. Catalyzes amidations at positions B, D, E, and G on adenosylcobyrinic A,C-diamide. NH(2) groups are provided by glutamine, and one molecule of ATP is hydrogenolyzed for each amidation. The protein is Cobyric acid synthase of Mycobacterium sp. (strain KMS).